Consider the following 380-residue polypeptide: Cytochrome b (380 aa).

Helical transmembrane passes span 34-54 (FGSLLGICLLTQILTGLLLAM), 78-99 (WLIRNLHANGASFFFICIYLHI), 114-134 (WNTGVILLLTLMATAFVGYVL), and 179-199 (FFALHFLLPFMIAGLTLIHLT). Residues His84 and His98 each coordinate heme b. 2 residues coordinate heme b: His183 and His197. His202 is an a ubiquinone binding site. 4 consecutive transmembrane segments (helical) span residues 227–247 (LKDILGFMLMLLPLTTLALFS), 289–309 (LGGVLALAASVLVLFLAPFLH), 321–341 (LSQLLFWILVANLFILTWVGS), and 348–368 (FIIIGQLASITYFTILLILFP).

It belongs to the cytochrome b family. As to quaternary structure, the cytochrome bc1 complex contains 11 subunits: 3 respiratory subunits (MT-CYB, CYC1 and UQCRFS1), 2 core proteins (UQCRC1 and UQCRC2) and 6 low-molecular weight proteins (UQCRH/QCR6, UQCRB/QCR7, UQCRQ/QCR8, UQCR10/QCR9, UQCR11/QCR10 and a cleavage product of UQCRFS1). This cytochrome bc1 complex then forms a dimer. The cofactor is heme b.

It localises to the mitochondrion inner membrane. Functionally, component of the ubiquinol-cytochrome c reductase complex (complex III or cytochrome b-c1 complex) that is part of the mitochondrial respiratory chain. The b-c1 complex mediates electron transfer from ubiquinol to cytochrome c. Contributes to the generation of a proton gradient across the mitochondrial membrane that is then used for ATP synthesis. The protein is Cytochrome b (MT-CYB) of Ardenna tenuirostris (Short-tailed shearwater).